Consider the following 88-residue polypeptide: Small ribosomal subunit protein bS20 (88 aa).

Residues 1-21 (MANTTSAKKATRKIARRTAVN) form a disordered region.

Belongs to the bacterial ribosomal protein bS20 family.

Its function is as follows. Binds directly to 16S ribosomal RNA. This Sinorhizobium fredii (strain NBRC 101917 / NGR234) protein is Small ribosomal subunit protein bS20.